A 284-amino-acid polypeptide reads, in one-letter code: 4-diphosphocytidyl-2-C-methyl-D-erythritol kinase (284 aa).

The active site involves Lys14. 98–108 serves as a coordination point for ATP; that stretch reads PMGGGLGGGSS. Asp140 is a catalytic residue.

It belongs to the GHMP kinase family. IspE subfamily.

The enzyme catalyses 4-CDP-2-C-methyl-D-erythritol + ATP = 4-CDP-2-C-methyl-D-erythritol 2-phosphate + ADP + H(+). The protein operates within isoprenoid biosynthesis; isopentenyl diphosphate biosynthesis via DXP pathway; isopentenyl diphosphate from 1-deoxy-D-xylulose 5-phosphate: step 3/6. Catalyzes the phosphorylation of the position 2 hydroxy group of 4-diphosphocytidyl-2C-methyl-D-erythritol. This is 4-diphosphocytidyl-2-C-methyl-D-erythritol kinase from Shewanella sp. (strain ANA-3).